The following is a 515-amino-acid chain: Glucose-6-phosphate 1-dehydrogenase (515 aa).

An N-acetylalanine modification is found at alanine 2. Serine 8 is subject to Phosphoserine. The residue at position 10 (threonine 10) is a Phosphothreonine. Residues 38–45 and arginine 72 contribute to the NADP(+) site; that span reads GASGDLAK. An N6-acetyllysine modification is found at lysine 89. The NADP(+) site is built by tyrosine 147 and lysine 171. D-glucose 6-phosphate contacts are provided by residues lysine 171, 201–205, glutamate 239, and aspartate 258; that span reads HYLGK. Lysine 171 carries the post-translational modification N6-(2-hydroxyisobutyryl)lysine; alternate. Residue lysine 171 is modified to N6-acetyllysine; alternate. Histidine 263 functions as the Proton acceptor in the catalytic mechanism. Position 357 (arginine 357) interacts with NADP(+). Residues lysine 360 and arginine 365 each contribute to the D-glucose 6-phosphate site. Positions 366, 370, and 393 each coordinate NADP(+). Glutamine 395 provides a ligand contact to D-glucose 6-phosphate. NADP(+)-binding positions include 401–403 and 421–423; these read YTK and DLT. Lysine 403 is modified (N6-acetyllysine). Position 432 is an N6-acetyllysine (lysine 432). Arginine 487 is an NADP(+) binding site. Lysine 497 is subject to N6-acetyllysine. Residues tyrosine 503 and tryptophan 509 each coordinate NADP(+). Residue tyrosine 503 is modified to Phosphotyrosine.

Belongs to the glucose-6-phosphate dehydrogenase family. As to quaternary structure, homotetramer; dimer of dimers. Interacts with SIRT2; the interaction is enhanced by H(2)O(2) treatment. Forms a ternary complex with ALDOB and TP53; this interaction is direct. ALDOB stabilizes the complex inhibiting G6PD activity and keeping oxidative pentose phosphate metabolism in check. Acetylated by ELP3 at Lys-403; acetylation inhibits its homodimerization and enzyme activity. Deacetylated by SIRT2 at Lys-403; deacetylation stimulates its enzyme activity.

It localises to the cytoplasm. It is found in the cytosol. The protein resides in the membrane. It catalyses the reaction D-glucose 6-phosphate + NADP(+) = 6-phospho-D-glucono-1,5-lactone + NADPH + H(+). It participates in carbohydrate degradation; pentose phosphate pathway; D-ribulose 5-phosphate from D-glucose 6-phosphate (oxidative stage): step 1/3. Cytosolic glucose-6-phosphate dehydrogenase that catalyzes the first and rate-limiting step of the oxidative branch within the pentose phosphate pathway/shunt, an alternative route to glycolysis for the dissimilation of carbohydrates and a major source of reducing power and metabolic intermediates for fatty acid and nucleic acid biosynthetic processes. The sequence is that of Glucose-6-phosphate 1-dehydrogenase (G6PD) from Osphranter robustus (Wallaroo).